The chain runs to 702 residues: Polyribonucleotide nucleotidyltransferase 2 (702 aa).

Asp-483 and Asp-489 together coordinate Mg(2+). The region spanning 550–609 is the KH domain; it reads PQVTKLKVHPDKVREVIGAGGKVINKIIDETGVKINIENDGTIYIAAPDQESARVALEMI. The 69-residue stretch at 619–687 folds into the S1 motif domain; the sequence is GEVYTGKVIK…PQGKIGLSRK (69 aa).

This sequence belongs to the polyribonucleotide nucleotidyltransferase family. Mg(2+) is required as a cofactor.

The protein localises to the cytoplasm. It carries out the reaction RNA(n+1) + phosphate = RNA(n) + a ribonucleoside 5'-diphosphate. Its function is as follows. Involved in mRNA degradation. Catalyzes the phosphorolysis of single-stranded polyribonucleotides processively in the 3'- to 5'-direction. The protein is Polyribonucleotide nucleotidyltransferase 2 of Alkaliphilus metalliredigens (strain QYMF).